A 451-amino-acid chain; its full sequence is MVSRDQAHLGPKYVGLWDFKSRTDEELSFRAGDVFHVARKEEQWWWATLLDEAGGAVAQGYVPHNYLAERETVESEPWFFGCISRSEAVRRLQAEGNATGAFLIRVSEKPSADYVLSVRDTQAVRHYKIWRRAGGRLHLNEAVSFLSLPELVNYHRAQSLSHGLRLAAPCRKHEPEPLPHWDDWERPREEFTLCRKLGSGYFGEVFEGLWKDRVQVAIKVISRDNLLHQQMLQSEIQAMKKLRHKHILALYAVVSVGDPVYIITELMAKGSLLELLRDSDEKVLPVSELLDIAWQVAEGMCYLESQNYIHRDLAARNILVGENTLCKVGDFGLARLIKEDVYLSHDHNIPYKWTAPEALSRGHYSTKSDVWSFGILLHEMFSRGQVPYPGMSNHEAFLRVDAGYRMPCPLECPPSVHKLMLTCWCRDPEQRPCFKALRERLSSFTSYENPT.

An SH3 domain is found at 8–72 (HLGPKYVGLW…PHNYLAERET (65 aa)). A phosphotyrosine; by autocatalysis mark is found at Tyr-13, Tyr-61, Tyr-66, and Tyr-114. One can recognise an SH2 domain in the interval 78-170 (WFFGCISRSE…SHGLRLAAPC (93 aa)). The segment at 171 to 190 (RKHEPEPLPHWDDWERPREE) is linker. The Protein kinase domain maps to 191–445 (FTLCRKLGSG…ALRERLSSFT (255 aa)). Residues 197–205 (LGSGYFGEV) and Lys-219 each bind ATP. Catalysis depends on Asp-312, which acts as the Proton acceptor. 2 positions are modified to phosphotyrosine; by autocatalysis: Tyr-342 and Tyr-351. Tyr-447 carries the phosphotyrosine modification.

Belongs to the protein kinase superfamily. Tyr protein kinase family. BRK/PTK6/SIK subfamily. As to quaternary structure, interacts with GAP-A.p65. Interacts (via SH3 and SH2 domains) with KHDRBS1. Interacts (via SH3 and SH2 domains) with phosphorylated IRS4. Interacts with ADAM15. Interacts (via SH3 domain) with SFPQ. Interacts with EGFR and ERBB2. Interacts with STAP2. Interacts with PNX. Interacts with SFPQ. Interacts with PTK/ATK. Interacts with CTNNB1. Autophosphorylated. Autophosphorylation of Tyr-342 leads to an increase of kinase activity. Tyr-447 binds to the SH2 domain when phosphorylated and negatively regulates kinase activity. As to expression, epithelia-specific. Very high level in colon and high levels in small intestine and prostate, and low levels in some fetal tissues. Not expressed in breast or ovarian tissue but expressed in high percentage of breast and ovarian cancers. Also overexpressed in some metastatic melanomas, lymphomas, colon cancers, squamous cell carcinomas and prostate cancers. Also found in melanocytes. Not expressed in heart, brain, placenta, lung, liver, skeletal muscle, kidney and pancreas. Isoform 2 is present in prostate epithelial cell lines derived from normal prostate and prostate adenocarcinomas, as well as in a variety of cell lines.

It localises to the cytoplasm. The protein resides in the nucleus. Its subcellular location is the cell projection. It is found in the ruffle. The protein localises to the membrane. The enzyme catalyses L-tyrosyl-[protein] + ATP = O-phospho-L-tyrosyl-[protein] + ADP + H(+). Its activity is regulated as follows. Activated by EGF, NRG1 and IGF1. Inhibited by SOCS3 to phosphorylate STAT3. Stabilized in the inactive form by an association between the SH3 domain and the SH2-TK linker region. Interaction between Trp-184 within SH2-TK linker region and the catalytic domain appears essential for positive regulation of kinase activity. Its function is as follows. Non-receptor tyrosine-protein kinase implicated in the regulation of a variety of signaling pathways that control the differentiation and maintenance of normal epithelia, as well as tumor growth. Function seems to be context dependent and differ depending on cell type, as well as its intracellular localization. A number of potential nuclear and cytoplasmic substrates have been identified. These include the RNA-binding proteins: KHDRBS1/SAM68, KHDRBS2/SLM1, KHDRBS3/SLM2 and SFPQ/PSF; transcription factors: STAT3 and STAT5A/B and a variety of signaling molecules: ARHGAP35/p190RhoGAP, PXN/paxillin, BTK/ATK, STAP2/BKS. Phosphorylates the GTPase-activating protein ARAP1 following EGF stimulation which enhances EGFR signaling by delaying EGFR down-regulation. Also associates with a variety of proteins that are likely upstream of PTK6 in various signaling pathways, or for which PTK6 may play an adapter-like role. These proteins include ADAM15, EGFR, ERBB2, ERBB3 and IRS4. In normal or non-tumorigenic tissues, PTK6 promotes cellular differentiation and apoptosis. In tumors PTK6 contributes to cancer progression by sensitizing cells to mitogenic signals and enhancing proliferation, anchorage-independent survival and migration/invasion. Association with EGFR, ERBB2, ERBB3 may contribute to mammary tumor development and growth through enhancement of EGF-induced signaling via BTK/AKT and PI3 kinase. Contributes to migration and proliferation by contributing to EGF-mediated phosphorylation of ARHGAP35/p190RhoGAP, which promotes association with RASA1/p120RasGAP, inactivating RhoA while activating RAS. EGF stimulation resulted in phosphorylation of PNX/Paxillin by PTK6 and activation of RAC1 via CRK/CrKII, thereby promoting migration and invasion. PTK6 activates STAT3 and STAT5B to promote proliferation. Nuclear PTK6 may be important for regulating growth in normal epithelia, while cytoplasmic PTK6 might activate oncogenic signaling pathways. Functionally, inhibits PTK6 phosphorylation and PTK6 association with other tyrosine-phosphorylated proteins. The polypeptide is Protein-tyrosine kinase 6 (PTK6) (Homo sapiens (Human)).